A 116-amino-acid chain; its full sequence is MFKKRLNKDKINDCYTWEEELPDGSYDMGFHGNLNHMEKGKSGYVTHKQLDKKLEVFKQDLLVELSEKFVTKEEFRAQGKQIKELQIEQKAQGKTLQLILEALQGINKRLDKLESK.

The protein belongs to the UPF0134 family.

The polypeptide is UPF0134 protein MPN_038 (Mycoplasma pneumoniae (strain ATCC 29342 / M129 / Subtype 1) (Mycoplasmoides pneumoniae)).